A 253-amino-acid polypeptide reads, in one-letter code: Cyclin-C1-2 (253 aa).

Belongs to the cyclin family. Cyclin C subfamily.

The sequence is that of Cyclin-C1-2 (CYCC1-2) from Arabidopsis thaliana (Mouse-ear cress).